The following is a 54-amino-acid chain: Insulin (54 aa).

Intrachain disulfides connect Cys7/Cys39, Cys19/Cys52, and Cys38/Cys43.

The protein belongs to the insulin family. In terms of assembly, heterodimer of a B chain and an A chain linked by two disulfide bonds.

It localises to the secreted. Functionally, insulin decreases blood glucose concentration. It increases cell permeability to monosaccharides, amino acids and fatty acids. It accelerates glycolysis, the pentose phosphate cycle, and glycogen synthesis in liver. This is Insulin (ins) from Squalus acanthias (Spiny dogfish).